The primary structure comprises 665 residues: Zinc finger CCCH domain-containing protein 45 (665 aa).

The disordered stretch occupies residues 1–55 (MDDGDLSFDFEGGLDQPPAGGGGGPAPHSSDPGGVGGGGGGGGPGDGGGHGRGRG). Over residues 33–50 (GGVGGGGGGGGPGDGGGH) the composition is skewed to gly residues. 3 C3H1-type zinc fingers span residues 58–85 (SYRQ…HQFD), 86–113 (KARM…HSYD), and 114–139 (DVKE…HVKL). The interval 167 to 256 (HNNYNQQGER…QATRIATPLP (90 aa)) is disordered. Positions 169-200 (NYNQQGERPQHPQGSGLPNQNSIDNTTTTTAQ) are enriched in polar residues. The segment covering 205–238 (QQAQTTNQQPPQQQQQQQQQQQQQQKPNTNDQVQ) has biased composition (low complexity). Polar residues predominate over residues 239-250 (SVPNGSSNQATR). The 136-residue stretch at 260-395 (SRYFIVKSCN…FIGEQLASLL (136 aa)) folds into the YTH domain. The stretch at 432-459 (DIVLFDDNEEEEEEESEEEEEGNGQESQ) forms a coiled coil. The segment covering 439–454 (NEEEEEEESEEEEEGN) has biased composition (acidic residues). 2 disordered regions span residues 439–469 (NEEE…GMMW) and 561–665 (GPLM…SRKR). The segment covering 561 to 573 (GPLMGGLGMGGPG) has biased composition (gly residues). Residues 596-623 (TKREQRRPGGERGDRYETTSDQGSRGHD) are compositionally biased toward basic and acidic residues.

The protein is Zinc finger CCCH domain-containing protein 45 of Oryza sativa subsp. japonica (Rice).